The sequence spans 195 residues: ATP-dependent Clp protease proteolytic subunit (195 aa).

S101 serves as the catalytic Nucleophile. H126 is an active-site residue.

Belongs to the peptidase S14 family.

The protein resides in the plastid. It is found in the chloroplast stroma. The catalysed reaction is Hydrolysis of proteins to small peptides in the presence of ATP and magnesium. alpha-casein is the usual test substrate. In the absence of ATP, only oligopeptides shorter than five residues are hydrolyzed (such as succinyl-Leu-Tyr-|-NHMec, and Leu-Tyr-Leu-|-Tyr-Trp, in which cleavage of the -Tyr-|-Leu- and -Tyr-|-Trp bonds also occurs).. Functionally, cleaves peptides in various proteins in a process that requires ATP hydrolysis. Has a chymotrypsin-like activity. Plays a major role in the degradation of misfolded proteins. The polypeptide is ATP-dependent Clp protease proteolytic subunit (Bigelowiella natans (Pedinomonas minutissima)).